The primary structure comprises 3342 residues: MTDSTDSRQATTNCRKYSRTTSNAPMLAANVLRDKSTSGLCSLDRKHDPYFGQIMDNPEVILDEWAKMVIDTTDVTVVAVGIRNQFAPDLSPASSVSCLRSSLAFLRIVFAYGLDTVISSDAIDRLLLQGKAWTIATSEDGTYTTCVPHDLPNRIISKDAGGNLCVAFSSSYGEFEFYLEENTPTILDTQISARTFIEQIWKKKRGDVYCLIVVGVLGIGVYRSGDGIYIFDPHGHGHIGQACIVRVSEGYFYQYLTSYADPSATPDWSATFVYFVSTVSICPPRDEIISTVSRIYGTSDIVLDLGRAREEDNRKVVSADFDPPSRPQPRLTKLVIGSTDTTIQGSDYPCIQAEDLNGEDSRPLDHNLSYNDAPTNTESVAPPSTKDCRDCINIQNPGETLDDTHSTIVDPSTKDSISVTAWQGVFSDVIEDPPPKTNFQFSFGTFAKVAENKIGTTSVEGCIRNYARHKRRRPLWTPQSSSENISLDGSSSSLSRKHSRKSKRTLESRIVEAVTSTESSDVTENVDTYPPVISNIPDEPTLGSSPTTSNRGEDTTVEHLLKNRPLFNFKSLTEDEDGLVQDRLWSDEYLSHYPLADIRDKIEDVACSIDSGLRIIVHVGSPYDSDGGLLYVCMMDIFARLFNYIIENGARTTSDRESVVGYEMAALLKAFTIPVYFTTFIASTGMVLSEASESIDLIERVLAENSKIGNLALSKMILVALEVEEVTDELHKSLDAIEKEVGTADPYGIYERMAAILVDTLYHNSGKLYSEKTSSNSNQTLTDRVISLCTLIRDIEAVAIRKAELILAEMEALEAGVRWMNTTLDAFIMGGSGSSPMIDAADIVAKTSSAVVTQRLGDIGKTVIDVVGHSLREYYLKVALYSVKALTASSSDVSRFKIVVTDQYEKINRFASSLSVIDDVMVLIASRSNARVPSPVSQAFESELLGNLLEIGSDLDVPEKLTTWKNLMTSMQVGGWISRRELDMLMKEIDIVNEKATRHETVLTELERLNELETRFGSYTDLDTTVELQKLDEAIKIGEDIVKLAIVLEDKKNATSLSSDVREKLRDTRRKNETFITHLRERYQEVKSTIEDLYSSIRKILRPLPKFVGLRALDSKVKVITESIPRGMGSFENFLASAPSDIIGSLQSDLWVLFIQYKTILSRPTTEVAAELSGLGVPFALAIRLVFGPQGSYPAASVFFGKHADVLSATIAAAAVEPMSVEKTMAVVSTLKAAISDIDRANAIAPPQGIMSISSTERSDAFLFLKALLSTAEIAADVANRGQHLESLIQSVRTILDNLITSNHKIRSLNPREVISENDTSVVASAKVEFSNAIQTVGNVTATLSTFEGLTYTSNPHIQRKIAELSKLIRSANQRAGELDIAIQTYEHNRISAERSRSEDLWISSINSLLLNAEVKSEFDAMEINRLEDAARTGGYDTIRYKSRAEKIVIAHARVLESSIESVLKFNPYSTQNMVHGLSPPIAALKSITWGDSFMTAAPYYTKLFGVNCDTVMDLLHISIAILRHANANSGNVDYYLLMGELESALKSYPNLVKYVNFYRSGYVKFMSFLAHLEQRRVEAHHASGRVALEISAALEDLARTHSPEGARRALEYGVSIIIPSVNTIMSIAEELKKDHVEELEGTAYSEYGAHLLRRDTDAMTSLIHRVTTAIEDAKTRGEAILKNLAEASYAADRESAELLANLKNLLRLVSMPSHIAKAIDRSETVNDIVTQAALLLTKVEETKELDSQTVEWLRHAESVIDSHDLTVRIDESGPMSIYADRIDALVNLSKRLEELKSELALAEVAWDDTWATFVHDKDRIDKSSEGFSSARESAARTKVSVNMINALRSNAEYPRLPAKIIGLIDTKYRDRVVVLDAFLTTVKEIEATQKQMEGLCEKIPSTFAINDLKKIYTQFEDIAKRLPKWYTKRVARYSRLLTLRLALYAGYSNTFEGNVGDPMLLPFDAGDANNGANHTSNVGVVNRYLKHRVASWIRPKVVATLQEAFSEIDSPGCLTYLDSTDKPLRYSLCFRTVGEKLAACLCEPAAIGIKPQIPIQPITTEETEAAAGMLSDIMTFRLGFVHDMANHLYSFTKYVRTKRHNWMQSDYIKALGTIYCALIAITLTRKNRSNLSDIYFIPGRRTPIVDKKELKKNAANGRGKQVVRLDPADVMVTIMANIPGHMLTFSKLDLIDQYDFMDKTIYEVMTDSISTVAFVNCLSVQLSKDNIPDPNCRPLSLTGSVWDPAGGSLFSVRYSDWRQGKLSDTDPLKLWEDLDGDAADGLAKIRAAIPSSLLTTTTVLARMCIPPTALAVIWSSLLPDGLEQNCKSYDDVVTARGDLASSLDVTTSLLSCSENKNISSITDSPNLYDLTGNVTTFTVVSTPPSRVLRVNAMDIATTATLFGARIVIAAECPEAYSSESGLSLCIRLFDSRHGSRGCFLEPTAVSSDMTSWGTKLLITDNNPIENACLGQQLEHLSRIVASKPLASAPPCLLIVDSGMAPIKVLWSKEILDPIPIIRLISEDDALISELPYVDAGIRKEPELANEHMVIADVQEASKFFSDESRIYPCPIYNKCVSPDLSRDGDADISSNRIDSEDDTYADSMGSGYLSIDPESMWDRVVENDMEGAQVQLLLPGDIIHHNDRHVSENMNYPQIGHLDISPNYRDPIDETSSNPPPFPKHSNLFPSDHDPTSESSSKPTPAPKPTPAPKPTPAPKPTPAPKPTPAPKPTPAPKPTPAPKPKPPPDPDFKPSPAPKPSPASKPTPAPKPSPAPKPKPPPDPDFKPTPAPKPSPASKPKPPPDPDFKPTPAPKPKPPPDPDFKPSPAPKPSPAPKPKPPPDPDFKPTPAPKPSPASKPSPASKPKPPPAPDSKPSPAPKPKPPPTPDSKPSPAPKPKSPSASKPLPVLFPNSDSKTSPVPNPNTFSASKIPPTSSIAEETKPCQSNLPAIPLITKPDSVKNGYTTLKTDDKRKGSQSRYRNEKSRKHMHNTHTAVYNTTFNWTGTAAASSRHDMELNQYSPGIVTFDNLIDKEGYRHESETIPRESYSEHRKDLDWMSTPTVIANASSSLITNNDYGGIGGIDLKKYRFKNGTGLLRQGSPTTRLHCRKNNSSRSITDILVGTASPTNEPSPLLQRLKAHTISGDKKANMDAGTIRGRLYDYSSFWPPCIQGACSTSPKTIDLKYLSSEQATVAYPKHDDTHHQTPTGLAPNDKHSDMHISSIITETDTKENSIPGYNNIPMRHSSESESLTSLDSDSDDSHLHVSGSTDTTTDGSSTSRVIPADALLTRRDFRNASRGALYALTKACKKVARQIVYVREQLRTKVATLAIELFKIKMILTG.

Residues methionine 1–valine 302 form a deubiquitination activity region. Residues valine 78–threonine 298 enclose the Peptidase C76 domain. Residues cysteine 98, aspartate 232, and histidine 234 contribute to the active site. The disordered stretch occupies residues arginine 472–aspartate 554. The segment covering serine 480–leucine 494 has biased composition (low complexity). Polar residues predominate over residues valine 514 to valine 526. An interaction with inner tegument protein region spans residues leucine 630 to arginine 656. Disordered stretches follow at residues aspartate 2584 to aspartate 2603, proline 2654 to histidine 2987, and proline 3196 to serine 3279. 5 stretches are compositionally biased toward pro residues: residues threonine 2701–lysine 2743, lysine 2751–lysine 2777, lysine 2785–lysine 2799, lysine 2823–lysine 2837, and lysine 2845–lysine 2897. Residues asparagine 2911–leucine 2947 show a composition bias toward polar residues. Over residues histidine 3264–serine 3279 the composition is skewed to low complexity.

This sequence belongs to the herpesviridae large tegument protein family. As to quaternary structure, interacts with host CUL1 and CUL4A; these interactions inhibit the E3 ligase activity of cullins. Interacts with inner tegument protein. Interacts with capsid vertex specific component CVC2. Interacts with the major capsid protein/MCP.

It is found in the virion tegument. It localises to the host cytoplasm. The protein localises to the host nucleus. The catalysed reaction is Thiol-dependent hydrolysis of ester, thioester, amide, peptide and isopeptide bonds formed by the C-terminal Gly of ubiquitin (a 76-residue protein attached to proteins as an intracellular targeting signal).. Functionally, large tegument protein that plays multiple roles in the viral cycle. During viral entry, remains associated with the capsid while most of the tegument is detached and participates in the capsid transport toward the host nucleus. Plays a role in the routing of the capsid at the nuclear pore complex and subsequent uncoating. Within the host nucleus, acts as a deneddylase and promotes the degradation of nuclear CRLs (cullin-RING ubiquitin ligases) and thereby stabilizes nuclear CRL substrates, while cytoplasmic CRLs remain unaffected. These modifications prevent host cell cycle S-phase progression and create a favorable environment allowing efficient viral genome replication. Participates later in the secondary envelopment of capsids. Indeed, plays a linker role for the association of the outer viral tegument to the capsids together with the inner tegument protein. In Gallus gallus (Chicken), this protein is Large tegument protein deneddylase (MDV049).